A 556-amino-acid polypeptide reads, in one-letter code: Formate--tetrahydrofolate ligase (556 aa).

65–72 (TPAGEGKT) lines the ATP pocket.

This sequence belongs to the formate--tetrahydrofolate ligase family.

It carries out the reaction (6S)-5,6,7,8-tetrahydrofolate + formate + ATP = (6R)-10-formyltetrahydrofolate + ADP + phosphate. Its pathway is one-carbon metabolism; tetrahydrofolate interconversion. This Ruminiclostridium cellulolyticum (strain ATCC 35319 / DSM 5812 / JCM 6584 / H10) (Clostridium cellulolyticum) protein is Formate--tetrahydrofolate ligase.